A 344-amino-acid chain; its full sequence is Heat-inducible transcription repressor HrcA (344 aa).

Belongs to the HrcA family.

In terms of biological role, negative regulator of class I heat shock genes (grpE-dnaK-dnaJ and groELS operons). Prevents heat-shock induction of these operons. This Geobacillus kaustophilus (strain HTA426) protein is Heat-inducible transcription repressor HrcA.